Reading from the N-terminus, the 98-residue chain is Plastocyanin (98 aa).

A Plastocyanin-like domain is found at 1-98 (DVTVKLGADS…AGMKGTITVQ (98 aa)). Cu cation is bound by residues His-38, Cys-83, His-86, and Met-91.

The protein belongs to the plastocyanin family. Requires Cu(2+) as cofactor.

The protein localises to the plastid. It is found in the chloroplast thylakoid membrane. Its function is as follows. Participates in electron transfer between P700 and the cytochrome b6-f complex in photosystem I. This is Plastocyanin (petE) from Scenedesmus fuscus (Green alga).